Here is a 180-residue protein sequence, read N- to C-terminus: Large ribosomal subunit protein uL5 (180 aa).

It belongs to the universal ribosomal protein uL5 family. As to quaternary structure, part of the 50S ribosomal subunit; part of the 5S rRNA/L5/L18/L25 subcomplex. Contacts the 5S rRNA and the P site tRNA. Forms a bridge to the 30S subunit in the 70S ribosome.

Its function is as follows. This is one of the proteins that bind and probably mediate the attachment of the 5S RNA into the large ribosomal subunit, where it forms part of the central protuberance. In the 70S ribosome it contacts protein S13 of the 30S subunit (bridge B1b), connecting the 2 subunits; this bridge is implicated in subunit movement. Contacts the P site tRNA; the 5S rRNA and some of its associated proteins might help stabilize positioning of ribosome-bound tRNAs. The protein is Large ribosomal subunit protein uL5 of Polynucleobacter asymbioticus (strain DSM 18221 / CIP 109841 / QLW-P1DMWA-1) (Polynucleobacter necessarius subsp. asymbioticus).